Consider the following 352-residue polypeptide: Selenide, water dikinase (352 aa).

C23 is a catalytic residue. ATP contacts are provided by residues K26 and 54 to 56 (SRD). Mg(2+) is bound at residue D57. Residues D74, D97, and 145–147 (GHS) contribute to the ATP site. D97 is a binding site for Mg(2+). Residue D233 coordinates Mg(2+).

It belongs to the selenophosphate synthase 1 family. Class I subfamily. As to quaternary structure, homodimer. Mg(2+) is required as a cofactor.

It catalyses the reaction hydrogenselenide + ATP + H2O = selenophosphate + AMP + phosphate + 2 H(+). In terms of biological role, synthesizes selenophosphate from selenide and ATP. This is Selenide, water dikinase from Shewanella baltica (strain OS185).